Reading from the N-terminus, the 93-residue chain is Translation initiation factor IF-1 (93 aa).

Residues 1–72 enclose the S1-like domain; sequence MAKEELIQFE…EKGRLIFRHK (72 aa). The segment at 70–93 is disordered; the sequence is RHKDERPGGPPRSGPPRGGQFRRR.

This sequence belongs to the IF-1 family. Component of the 30S ribosomal translation pre-initiation complex which assembles on the 30S ribosome in the order IF-2 and IF-3, IF-1 and N-formylmethionyl-tRNA(fMet); mRNA recruitment can occur at any time during PIC assembly.

Its subcellular location is the cytoplasm. In terms of biological role, one of the essential components for the initiation of protein synthesis. Stabilizes the binding of IF-2 and IF-3 on the 30S subunit to which N-formylmethionyl-tRNA(fMet) subsequently binds. Helps modulate mRNA selection, yielding the 30S pre-initiation complex (PIC). Upon addition of the 50S ribosomal subunit IF-1, IF-2 and IF-3 are released leaving the mature 70S translation initiation complex. The chain is Translation initiation factor IF-1 from Nitrobacter winogradskyi (strain ATCC 25391 / DSM 10237 / CIP 104748 / NCIMB 11846 / Nb-255).